Reading from the N-terminus, the 388-residue chain is Chorismate synthase (388 aa).

Residues Arg39 and Arg45 each coordinate NADP(+). FMN-binding positions include Arg130 to Ser132, Asn251 to Ala252, Gly296, Lys311 to Thr315, and Arg337.

It belongs to the chorismate synthase family. Homotetramer. FMNH2 serves as cofactor.

The enzyme catalyses 5-O-(1-carboxyvinyl)-3-phosphoshikimate = chorismate + phosphate. It functions in the pathway metabolic intermediate biosynthesis; chorismate biosynthesis; chorismate from D-erythrose 4-phosphate and phosphoenolpyruvate: step 7/7. In terms of biological role, catalyzes the anti-1,4-elimination of the C-3 phosphate and the C-6 proR hydrogen from 5-enolpyruvylshikimate-3-phosphate (EPSP) to yield chorismate, which is the branch point compound that serves as the starting substrate for the three terminal pathways of aromatic amino acid biosynthesis. This reaction introduces a second double bond into the aromatic ring system. This Streptococcus thermophilus (strain CNRZ 1066) protein is Chorismate synthase.